The sequence spans 184 residues: Antigen Sm21.7 (184 aa).

One can recognise an EF-hand domain in the interval 37 to 72 (LDMKQVNEWIALFDVDKDQKITFEEFCRGLGLKQNE). Ca(2+) contacts are provided by Asp-50, Asp-52, Asp-54, Lys-56, and Glu-61.

This chain is Antigen Sm21.7 (SM21.7), found in Schistosoma mansoni (Blood fluke).